The primary structure comprises 530 residues: PC4 and SFRS1-interacting protein (530 aa).

Residues 1-64 enclose the PWWP domain; that stretch reads MTRDFKPGDL…PKDIFPYSEN (64 aa). A Glycyl lysine isopeptide (Lys-Gly) (interchain with G-Cter in SUMO2) cross-link involves residue Lys75. The disordered stretch occupies residues 88 to 349; it reads PKVKFSSQQA…VEKKRETSMD (262 aa). A compositionally biased stretch (polar residues) spans 92–104; it reads FSSQQAATKQSNA. 3 positions are modified to phosphoserine: Ser102, Ser105, and Ser106. The span at 113 to 135 shows a compositional bias: basic and acidic residues; that stretch reads KETSVSKEDTDHEEKASNEDVTK. A phosphothreonine mark is found at Thr115 and Thr122. At Ser129 the chain carries Phosphoserine. Thr141 carries the phosphothreonine modification. The span at 144–153 shows a compositional bias: basic residues; it reads AARRGRKRKA. The short motif at 146-156 is the Nuclear localization signal element; it reads RRGRKRKAEKQ. Phosphothreonine is present on Thr167. A phosphoserine mark is found at Ser177 and Ser206. Residues 213–261 are compositionally biased toward basic and acidic residues; it reads EEDKSKKKGQEEKQPKKQPKKDEEGQKEEDKPRKEPDKKEGKKEVESKR. Residue Ser271 is modified to Phosphoserine. Thr272 bears the Phosphothreonine mark. Residues Ser273 and Ser275 each carry the phosphoserine modification. The segment covering 274–283 has biased composition (acidic residues); sequence DSEEEGDDQE. Residues 287–302 show a composition bias toward basic residues; that stretch reads KRKGGRNFQTAHRRNM. The segment covering 305–349 has biased composition (basic and acidic residues); it reads GQHEKEAADRKRKQEEQMETEQQNKDEGKKPEVKKVEKKRETSMD. Coiled-coil stretches lie at residues 306–334 and 371–395; these read QHEKEAADRKRKQEEQMETEQQNKDEGKK and NRCIEALDELASLQVTMQQAQKHTE. Positions 340–417 are integrase-binding domain (IBD); it reads VEKKRETSMD…VSQVIMEKST (78 aa). Ser434 carries the post-translational modification Phosphoserine. Thr437 bears the Phosphothreonine mark. A Phosphoserine modification is found at Ser443. A compositionally biased stretch (basic and acidic residues) spans 446-473; that stretch reads EQRQHEEANKTKDQGKKGPNKKLEKEQT. Residues 446–530 form a disordered region; the sequence is EQRQHEEANK…ISLKDSTLDN (85 aa). Residues 474–494 show a composition bias toward polar residues; sequence GSKTLNGGSDAQDGNQPQHNG. The span at 498-530 shows a compositional bias: basic and acidic residues; the sequence is EDSKDNHEASTKKKPSSEERETEISLKDSTLDN. At Ser514 the chain carries Phosphoserine. Arg517 bears the Citrulline mark. A Phosphoserine modification is found at Ser522. Thr527 bears the Phosphothreonine mark.

The protein belongs to the HDGF family. As to quaternary structure, monomer. Interacts with IFRD1/PC4. Isoform 2 interacts with SFRS1. Isoform 1 interacts (via IBD domain) with POGZ (via IBM motif) and CDCA7L (via IBM motifs). Interacts (via IBD domain) with KMT2A (via IBM motifs) with a moderate affinity whereas interacts with the KMT2A-MEN1 complex with a greater affinity; MEN1 enhances interaction of KMT2A with PSIP1. Interacts with fusion protein KMT2A-MLLT3. Interacts (via IBD domain) with IWS1 (via IBM motif), MED1 (via IBM motif) and DBF4 (via IBM motifs). In terms of assembly, (Microbial infection) Interacts (via IBD domain) with human HIV-1 integrase protein (HIV-1 IN), determining its nuclear localization, its tight association with chromatin and its protection from the proteasome. (Microbial infection) Interacts with HIV-2 IN. In terms of processing, citrullinated by PADI4. Widely expressed. Expressed at high level in the thymus. Expressed in fetal and adult brain. Expressed in neurons, but not astrocytes. Markedly elevated in fetal as compared to adult brain. In the adult brain, expressed in the subventricular zone (SVZ), in hippocampus, and undetectable elsewhere. In the fetal brain, expressed in the germinal neuroepithelium and cortical plate regions.

Its subcellular location is the nucleus. Its function is as follows. Transcriptional coactivator involved in neuroepithelial stem cell differentiation and neurogenesis. Involved in particular in lens epithelial cell gene regulation and stress responses. May play an important role in lens epithelial to fiber cell terminal differentiation. May play a protective role during stress-induced apoptosis. Isoform 2 is a more general and stronger transcriptional coactivator. Isoform 2 may also act as an adapter to coordinate pre-mRNA splicing. Cellular cofactor for lentiviral integration. The polypeptide is PC4 and SFRS1-interacting protein (PSIP1) (Homo sapiens (Human)).